Here is a 147-residue protein sequence, read N- to C-terminus: MKVKIISVGKVKDKGLNELINYYAKQIKTIEMVEITDEASITGMEKEGQKILSKIAKDSYVISLAIEGKMLDSVEFADTLDHVTTNFGPSITFIIGGSFGLSHAVKEKSNLLLSFSKMTFPHQLMKLFLVEQIFRAQAILNNHPYHK.

S-adenosyl-L-methionine-binding positions include Leu-64, Gly-96, and 115-120; that span reads FSKMTF.

This sequence belongs to the RNA methyltransferase RlmH family. As to quaternary structure, homodimer.

It localises to the cytoplasm. It carries out the reaction pseudouridine(1915) in 23S rRNA + S-adenosyl-L-methionine = N(3)-methylpseudouridine(1915) in 23S rRNA + S-adenosyl-L-homocysteine + H(+). Functionally, specifically methylates the pseudouridine at position 1915 (m3Psi1915) in 23S rRNA. This chain is Ribosomal RNA large subunit methyltransferase H, found in Acholeplasma laidlawii (strain PG-8A).